We begin with the raw amino-acid sequence, 380 residues long: Cytochrome b (380 aa).

4 helical membrane-spanning segments follow: residues 34–54 (FGSL…LLAM), 78–99 (WLIR…YLHI), 114–134 (WNTG…GYVL), and 179–199 (FFAL…IHLT). Residues His-84 and His-98 each contribute to the heme b site. Heme b-binding residues include His-183 and His-197. An a ubiquinone-binding site is contributed by His-202. A run of 4 helical transmembrane segments spans residues 227–247 (LKDI…ALFS), 289–309 (LGGV…PFLH), 321–341 (LSQL…WVGS), and 348–368 (FIII…ILFP).

Belongs to the cytochrome b family. The cytochrome bc1 complex contains 11 subunits: 3 respiratory subunits (MT-CYB, CYC1 and UQCRFS1), 2 core proteins (UQCRC1 and UQCRC2) and 6 low-molecular weight proteins (UQCRH/QCR6, UQCRB/QCR7, UQCRQ/QCR8, UQCR10/QCR9, UQCR11/QCR10 and a cleavage product of UQCRFS1). This cytochrome bc1 complex then forms a dimer. Heme b is required as a cofactor.

The protein resides in the mitochondrion inner membrane. In terms of biological role, component of the ubiquinol-cytochrome c reductase complex (complex III or cytochrome b-c1 complex) that is part of the mitochondrial respiratory chain. The b-c1 complex mediates electron transfer from ubiquinol to cytochrome c. Contributes to the generation of a proton gradient across the mitochondrial membrane that is then used for ATP synthesis. This Thalassoica antarctica (Antarctic petrel) protein is Cytochrome b (MT-CYB).